A 377-amino-acid chain; its full sequence is Succinyl-diaminopimelate desuccinylase (377 aa).

Zn(2+) is bound at residue histidine 67. Aspartate 69 is an active-site residue. Aspartate 100 lines the Zn(2+) pocket. The active-site Proton acceptor is glutamate 134. 3 residues coordinate Zn(2+): glutamate 135, glutamate 163, and histidine 349.

It belongs to the peptidase M20A family. DapE subfamily. Homodimer. Requires Zn(2+) as cofactor. It depends on Co(2+) as a cofactor.

The enzyme catalyses N-succinyl-(2S,6S)-2,6-diaminopimelate + H2O = (2S,6S)-2,6-diaminopimelate + succinate. The protein operates within amino-acid biosynthesis; L-lysine biosynthesis via DAP pathway; LL-2,6-diaminopimelate from (S)-tetrahydrodipicolinate (succinylase route): step 3/3. Its function is as follows. Catalyzes the hydrolysis of N-succinyl-L,L-diaminopimelic acid (SDAP), forming succinate and LL-2,6-diaminopimelate (DAP), an intermediate involved in the bacterial biosynthesis of lysine and meso-diaminopimelic acid, an essential component of bacterial cell walls. The sequence is that of Succinyl-diaminopimelate desuccinylase from Glaesserella parasuis serovar 5 (strain SH0165) (Haemophilus parasuis).